A 153-amino-acid chain; its full sequence is Insulin-like growth factor 1 (153 aa).

Residues 49-77 (GPETLCGAELVDALQFVCGPRGFYFNKPT) are b. 3 disulfide bridges follow: C54–C96, C66–C109, and C95–C100. The segment at 78-89 (GYGSSIRRAPQT) is c. Residues 90-110 (GIVDECCFRSCDLRRLEMYCA) form an a region. The d stretch occupies residues 111–118 (PLKPTKAA). Positions 119 to 153 (RSIRAQRHTDMPKTQKEVHLKNTSRGSAGNKTYRM) are cleaved as a propeptide — e peptide. The tract at residues 120-153 (SIRAQRHTDMPKTQKEVHLKNTSRGSAGNKTYRM) is disordered. Basic and acidic residues predominate over residues 125–138 (RHTDMPKTQKEVHL). Over residues 139–153 (KNTSRGSAGNKTYRM) the composition is skewed to polar residues.

The protein belongs to the insulin family. Forms a ternary complex with IGFR1 and ITGAV:ITGB3. Forms a ternary complex with IGFR1 and ITGA6:ITGB4. Interacts with SH2D3C isoform 2. Forms a ternary complex with IGFBP3 and ALS.

The protein localises to the secreted. In terms of biological role, the insulin-like growth factors, isolated from plasma, are structurally and functionally related to insulin but have a much higher growth-promoting activity. May be a physiological regulator of [1-14C]-2-deoxy-D-glucose (2DG) transport and glycogen synthesis in osteoblasts. Stimulates glucose transport in bone-derived osteoblastic (PyMS) cells and is effective at much lower concentrations than insulin, not only regarding glycogen and DNA synthesis but also with regard to enhancing glucose uptake. May play a role in synapse maturation. Ca(2+)-dependent exocytosis of IGF1 is required for sensory perception of smell in the olfactory bulb. Acts as a ligand for IGF1R. Binds to the alpha subunit of IGF1R, leading to the activation of the intrinsic tyrosine kinase activity which autophosphorylates tyrosine residues in the beta subunit thus initiating a cascade of down-stream signaling events leading to activation of the PI3K-AKT/PKB and the Ras-MAPK pathways. Binds to integrins ITGAV:ITGB3 and ITGA6:ITGB4. Its binding to integrins and subsequent ternary complex formation with integrins and IGFR1 are essential for IGF1 signaling. Induces the phosphorylation and activation of IGFR1, MAPK3/ERK1, MAPK1/ERK2 and AKT1. As part of the MAPK/ERK signaling pathway, acts as a negative regulator of apoptosis in cardiomyocytes via promotion of STUB1/CHIP-mediated ubiquitination and degradation of ICER-type isoforms of CREM. This is Insulin-like growth factor 1 from Mus musculus (Mouse).